The primary structure comprises 473 residues: Glutamate--tRNA ligase 1 (473 aa).

The short motif at 11–21 (PSPTGYLHIGG) is the 'HIGH' region element. A compositionally biased stretch (basic and acidic residues) spans 113-133 (KARAEGRPPRYDGRWRDRDPS). The segment at 113–136 (KARAEGRPPRYDGRWRDRDPSEAP) is disordered. The 'KMSKS' region motif lies at 240–244 (KLSKR). Lys243 is a binding site for ATP.

Belongs to the class-I aminoacyl-tRNA synthetase family. Glutamate--tRNA ligase type 1 subfamily. In terms of assembly, monomer.

Its subcellular location is the cytoplasm. The catalysed reaction is tRNA(Glu) + L-glutamate + ATP = L-glutamyl-tRNA(Glu) + AMP + diphosphate. Functionally, catalyzes the attachment of glutamate to tRNA(Glu) in a two-step reaction: glutamate is first activated by ATP to form Glu-AMP and then transferred to the acceptor end of tRNA(Glu). This is Glutamate--tRNA ligase 1 from Brucella melitensis biotype 1 (strain ATCC 23456 / CCUG 17765 / NCTC 10094 / 16M).